The primary structure comprises 229 residues: Cytochrome c oxidase subunit 2 (229 aa).

Over 1 to 14 (MANPTHLGFQDAMS) the chain is Mitochondrial intermembrane. Residues 15–45 (PLMEELLYFHDHTLMILFLISSLVFYMIFAL) form a helical membrane-spanning segment. Over 46–59 (LFPKLYYPNTSDVQ) the chain is Mitochondrial matrix. Residues 60–87 (EVEVIWTVLPAIVLISIALPSLRTLYLM) form a helical membrane-spanning segment. Residues 88–229 (DETNNPCLTI…QLWLEDSILS (142 aa)) lie on the Mitochondrial intermembrane side of the membrane. Residues histidine 161, cysteine 196, glutamate 198, cysteine 200, histidine 204, and methionine 207 each coordinate Cu cation. Residue glutamate 198 participates in Mg(2+) binding.

The protein belongs to the cytochrome c oxidase subunit 2 family. Component of the cytochrome c oxidase (complex IV, CIV), a multisubunit enzyme composed of 14 subunits. The complex is composed of a catalytic core of 3 subunits MT-CO1, MT-CO2 and MT-CO3, encoded in the mitochondrial DNA, and 11 supernumerary subunits COX4I, COX5A, COX5B, COX6A, COX6B, COX6C, COX7A, COX7B, COX7C, COX8 and NDUFA4, which are encoded in the nuclear genome. The complex exists as a monomer or a dimer and forms supercomplexes (SCs) in the inner mitochondrial membrane with NADH-ubiquinone oxidoreductase (complex I, CI) and ubiquinol-cytochrome c oxidoreductase (cytochrome b-c1 complex, complex III, CIII), resulting in different assemblies (supercomplex SCI(1)III(2)IV(1) and megacomplex MCI(2)III(2)IV(2)). Found in a complex with TMEM177, COA6, COX18, COX20, SCO1 and SCO2. Interacts with TMEM177 in a COX20-dependent manner. Interacts with COX20. Interacts with COX16. Cu cation is required as a cofactor.

It is found in the mitochondrion inner membrane. The catalysed reaction is 4 Fe(II)-[cytochrome c] + O2 + 8 H(+)(in) = 4 Fe(III)-[cytochrome c] + 2 H2O + 4 H(+)(out). In terms of biological role, component of the cytochrome c oxidase, the last enzyme in the mitochondrial electron transport chain which drives oxidative phosphorylation. The respiratory chain contains 3 multisubunit complexes succinate dehydrogenase (complex II, CII), ubiquinol-cytochrome c oxidoreductase (cytochrome b-c1 complex, complex III, CIII) and cytochrome c oxidase (complex IV, CIV), that cooperate to transfer electrons derived from NADH and succinate to molecular oxygen, creating an electrochemical gradient over the inner membrane that drives transmembrane transport and the ATP synthase. Cytochrome c oxidase is the component of the respiratory chain that catalyzes the reduction of oxygen to water. Electrons originating from reduced cytochrome c in the intermembrane space (IMS) are transferred via the dinuclear copper A center (CU(A)) of subunit 2 and heme A of subunit 1 to the active site in subunit 1, a binuclear center (BNC) formed by heme A3 and copper B (CU(B)). The BNC reduces molecular oxygen to 2 water molecules using 4 electrons from cytochrome c in the IMS and 4 protons from the mitochondrial matrix. The polypeptide is Cytochrome c oxidase subunit 2 (MT-CO2) (Alligator mississippiensis (American alligator)).